Reading from the N-terminus, the 60-residue chain is Large ribosomal subunit protein bL32 (60 aa).

This sequence belongs to the bacterial ribosomal protein bL32 family.

The chain is Large ribosomal subunit protein bL32 (rpmF) from Borreliella burgdorferi (strain ATCC 35210 / DSM 4680 / CIP 102532 / B31) (Borrelia burgdorferi).